The following is a 64-amino-acid chain: uncharacterized protein (64 aa).

The protein resides in the host cytoplasm. This is an uncharacterized protein from Enterobacteriaceae (Bacteriophage Mu).